The chain runs to 358 residues: GDSL esterase/lipase At2g30220 (358 aa).

An N-terminal signal peptide occupies residues 1–22; it reads MYISKTIVFGLFVATLLVSCNA. N-linked (GlcNAc...) asparagine glycosylation occurs at Asn-25. Residue Ser-40 is the Nucleophile of the active site. N-linked (GlcNAc...) asparagine glycosylation is found at Asn-102 and Asn-324. Catalysis depends on residues Asp-332 and His-335.

Belongs to the 'GDSL' lipolytic enzyme family.

It localises to the secreted. The polypeptide is GDSL esterase/lipase At2g30220 (Arabidopsis thaliana (Mouse-ear cress)).